A 354-amino-acid chain; its full sequence is DNA polymerase IV (354 aa).

Residues 6–187 (IIHIDCDCFY…LPVTKLHGVG (182 aa)) enclose the UmuC domain. 2 residues coordinate Mg(2+): Asp-10 and Asp-105. Residue Glu-106 is part of the active site.

The protein belongs to the DNA polymerase type-Y family. Monomer. The cofactor is Mg(2+).

The protein localises to the cytoplasm. The enzyme catalyses DNA(n) + a 2'-deoxyribonucleoside 5'-triphosphate = DNA(n+1) + diphosphate. Poorly processive, error-prone DNA polymerase involved in untargeted mutagenesis. Copies undamaged DNA at stalled replication forks, which arise in vivo from mismatched or misaligned primer ends. These misaligned primers can be extended by PolIV. Exhibits no 3'-5' exonuclease (proofreading) activity. May be involved in translesional synthesis, in conjunction with the beta clamp from PolIII. The protein is DNA polymerase IV of Pseudomonas syringae pv. syringae (strain B728a).